Consider the following 174-residue polypeptide: Ribosome maturation factor RimM (174 aa).

A PRC barrel domain is found at glutamate 98–leucine 171.

It belongs to the RimM family. Binds ribosomal protein uS19.

It localises to the cytoplasm. In terms of biological role, an accessory protein needed during the final step in the assembly of 30S ribosomal subunit, possibly for assembly of the head region. Essential for efficient processing of 16S rRNA. May be needed both before and after RbfA during the maturation of 16S rRNA. It has affinity for free ribosomal 30S subunits but not for 70S ribosomes. This Bacillus licheniformis (strain ATCC 14580 / DSM 13 / JCM 2505 / CCUG 7422 / NBRC 12200 / NCIMB 9375 / NCTC 10341 / NRRL NRS-1264 / Gibson 46) protein is Ribosome maturation factor RimM.